We begin with the raw amino-acid sequence, 682 residues long: Methionine--tRNA ligase (682 aa).

A 'HIGH' region motif is present at residues 15–25 (PYANGAIHLGH). 4 residues coordinate Zn(2+): cysteine 146, cysteine 149, cysteine 159, and cysteine 162. Positions 331–335 (KMSKS) match the 'KMSKS' region motif. Lysine 334 is a binding site for ATP. Positions 580-682 (DFAKLDLRVA…QGVKPGMQVK (103 aa)) constitute a tRNA-binding domain.

It belongs to the class-I aminoacyl-tRNA synthetase family. MetG type 1 subfamily. As to quaternary structure, homodimer. Requires Zn(2+) as cofactor.

It localises to the cytoplasm. It catalyses the reaction tRNA(Met) + L-methionine + ATP = L-methionyl-tRNA(Met) + AMP + diphosphate. Is required not only for elongation of protein synthesis but also for the initiation of all mRNA translation through initiator tRNA(fMet) aminoacylation. The protein is Methionine--tRNA ligase of Pasteurella multocida (strain Pm70).